A 268-amino-acid chain; its full sequence is Tryptophan synthase alpha chain (268 aa).

Catalysis depends on proton acceptor residues Glu49 and Asp60.

This sequence belongs to the TrpA family. As to quaternary structure, tetramer of two alpha and two beta chains.

The catalysed reaction is (1S,2R)-1-C-(indol-3-yl)glycerol 3-phosphate + L-serine = D-glyceraldehyde 3-phosphate + L-tryptophan + H2O. Its pathway is amino-acid biosynthesis; L-tryptophan biosynthesis; L-tryptophan from chorismate: step 5/5. The alpha subunit is responsible for the aldol cleavage of indoleglycerol phosphate to indole and glyceraldehyde 3-phosphate. The polypeptide is Tryptophan synthase alpha chain (Salmonella choleraesuis (strain SC-B67)).